Here is a 614-residue protein sequence, read N- to C-terminus: uncharacterized protein (614 aa).

Transmembrane regions (helical) follow at residues 494–516 (VAYWSFGALCIAVPIALILGSTL) and 552–574 (LLIGTGVAVGVAVILSINFIVHA). The interval 588–614 (AVRPRADKDIQTLTHRDEAEEDQEEDS) is disordered. Over residues 591–605 (PRADKDIQTLTHRDE) the composition is skewed to basic and acidic residues.

The protein resides in the cell membrane. This is an uncharacterized protein from Treponema pallidum (strain Nichols).